A 346-amino-acid chain; its full sequence is Phenylalanine--tRNA ligase alpha subunit (346 aa).

Residue Glu-264 participates in Mg(2+) binding.

The protein belongs to the class-II aminoacyl-tRNA synthetase family. Phe-tRNA synthetase alpha subunit type 1 subfamily. Tetramer of two alpha and two beta subunits. Requires Mg(2+) as cofactor.

The protein localises to the cytoplasm. The enzyme catalyses tRNA(Phe) + L-phenylalanine + ATP = L-phenylalanyl-tRNA(Phe) + AMP + diphosphate + H(+). This chain is Phenylalanine--tRNA ligase alpha subunit, found in Leifsonia xyli subsp. xyli (strain CTCB07).